A 134-amino-acid polypeptide reads, in one-letter code: Large ribosomal subunit protein eL32 (134 aa).

Belongs to the eukaryotic ribosomal protein eL32 family.

The polypeptide is Large ribosomal subunit protein eL32 (RpL32) (Drosophila melanogaster (Fruit fly)).